Here is a 178-residue protein sequence, read N- to C-terminus: Large ribosomal subunit protein uL6 (178 aa).

Belongs to the universal ribosomal protein uL6 family. As to quaternary structure, part of the 50S ribosomal subunit.

Functionally, this protein binds to the 23S rRNA, and is important in its secondary structure. It is located near the subunit interface in the base of the L7/L12 stalk, and near the tRNA binding site of the peptidyltransferase center. The chain is Large ribosomal subunit protein uL6 from Streptococcus thermophilus (strain CNRZ 1066).